The sequence spans 578 residues: Zinc finger-containing ubiquitin peptidase 1 (578 aa).

Residues 2–24 (LSCNICGETVTSEPDMKAHLIVH) form a C2H2-type 1 zinc finger. The C2H2-type 2; atypical zinc-finger motif lies at 29 to 52 (IICPFCKLSGVNYDEMCFHIETAH). C2H2-type zinc fingers lie at residues 154–177 (PECPFCGKIEEHSEDMETHVKTKH) and 193–215 (YDCPMCGLICTNYHILQEHVDLH). The tract at residues 226-248 (DRVQCSGDLQLAHQLQQEEDRKR) is MIU. Residues 249 to 274 (RSEESRQEIEEFQKLQRQYGLDNSGG) form a zUBD/ZHA region. The residue at position 262 (Lys262) is an N6-acetyllysine. Cys360 acts as the Nucleophile in catalysis. The active-site Proton acceptor is the His491. Asp512 is a catalytic residue.

This sequence belongs to the peptidase C78 family. ZUFSP subfamily. Interacts with RPA1 and RPA2.

The protein localises to the cytoplasm. It localises to the nucleus. The catalysed reaction is Thiol-dependent hydrolysis of ester, thioester, amide, peptide and isopeptide bonds formed by the C-terminal Gly of ubiquitin (a 76-residue protein attached to proteins as an intracellular targeting signal).. Its function is as follows. Deubiquitinase with endodeubiquitinase activity that specifically interacts with and cleaves 'Lys-63'-linked long polyubiquitin chains. Shows only weak activity against 'Lys-11' and 'Lys-48'-linked chains. Plays an important role in genome stability pathways, functioning to prevent spontaneous DNA damage and also promote cellular survival in response to exogenous DNA damage. Modulates the ubiquitination status of replication protein A (RPA) complex proteins in response to replication stress. The sequence is that of Zinc finger-containing ubiquitin peptidase 1 from Homo sapiens (Human).